Reading from the N-terminus, the 250-residue chain is MSKPGAELEEVFSSVQGEGMLIGLRQVFIRFRGCNLTCDYCDTPAGTPAEPCRIEQTPGRRDFVPADNPVSLDRVAALVEGWQRGWPGVHDSISITGGEPLLRHDILMQWLPVLREHLPVYLETNGVMHAALGLVINHVDIIGMDIKIPSTSGCTDLWDDHRQFLEIANTRRAFIKIVVGEETEDWEITRASEIIAGVNRDIPLILQPVTRAGDTLGIKPVKALELQELACRYLAEVRIIPQTHRFMGQL.

Substrate contacts are provided by residues 15–17 (VQG) and arginine 30. The region spanning 21 to 250 (LIGLRQVFIR…PQTHRFMGQL (230 aa)) is the Radical SAM core domain. [4Fe-4S] cluster-binding residues include cysteine 34, cysteine 38, and cysteine 41. Position 43 (threonine 43) interacts with Mg(2+). Threonine 96 provides a ligand contact to substrate. Glycine 98 is a binding site for S-adenosyl-L-methionine.

The protein belongs to the radical SAM superfamily. 7-carboxy-7-deazaguanine synthase family. Homodimer. It depends on [4Fe-4S] cluster as a cofactor. Requires S-adenosyl-L-methionine as cofactor. The cofactor is Mg(2+).

It catalyses the reaction 6-carboxy-5,6,7,8-tetrahydropterin + H(+) = 7-carboxy-7-deazaguanine + NH4(+). The protein operates within purine metabolism; 7-cyano-7-deazaguanine biosynthesis. In terms of biological role, catalyzes the complex heterocyclic radical-mediated conversion of 6-carboxy-5,6,7,8-tetrahydropterin (CPH4) to 7-carboxy-7-deazaguanine (CDG), a step common to the biosynthetic pathways of all 7-deazapurine-containing compounds. This Geobacter sulfurreducens (strain ATCC 51573 / DSM 12127 / PCA) protein is 7-carboxy-7-deazaguanine synthase.